The primary structure comprises 176 residues: Adenylyl-sulfate kinase (176 aa).

12–19 serves as a coordination point for ATP; sequence GLSGAGKS. The Phosphoserine intermediate role is filled by serine 86.

This sequence belongs to the APS kinase family.

The catalysed reaction is adenosine 5'-phosphosulfate + ATP = 3'-phosphoadenylyl sulfate + ADP + H(+). The protein operates within sulfur metabolism; hydrogen sulfide biosynthesis; sulfite from sulfate: step 2/3. Catalyzes the synthesis of activated sulfate. In Gloeothece citriformis (strain PCC 7424) (Cyanothece sp. (strain PCC 7424)), this protein is Adenylyl-sulfate kinase.